Here is a 379-residue protein sequence, read N- to C-terminus: Putative zinc metalloprotease sll0528 (379 aa).

2 helical membrane passes run 20 to 40 (LFGIPFYVNPSWFLILGLVTL) and 54 to 74 (GGTPWILGLITALLLFASVVA). H75 is a binding site for Zn(2+). E76 is an active-site residue. Position 79 (H79) interacts with Zn(2+). 3 helical membrane passes run 115-135 (FAVAIAGPAVSLVLFLGLTIV), 148-168 (IIGLLGMINLALALFNLIPGL), and 212-232 (GILNILPIGSFWTILIGWFLL). CBS domains follow at residues 257–315 (VIPN…DWPQ) and 322–379 (MQYP…TSAA).

It belongs to the peptidase M50B family. The cofactor is Zn(2+).

Its subcellular location is the cell membrane. In Synechocystis sp. (strain ATCC 27184 / PCC 6803 / Kazusa), this protein is Putative zinc metalloprotease sll0528.